Consider the following 149-residue polypeptide: Large ribosomal subunit protein bL9 (149 aa).

This sequence belongs to the bacterial ribosomal protein bL9 family.

Functionally, binds to the 23S rRNA. The chain is Large ribosomal subunit protein bL9 from Thiobacillus denitrificans (strain ATCC 25259 / T1).